Consider the following 568-residue polypeptide: Putative DEAD-box RNA helicase HEL64 (568 aa).

Positions 1 to 34 (MEETYSPFTGRQGQYNQGYNGGGRRDSRGGMGER) are disordered. The span at 23 to 34 (GRRDSRGGMGER) shows a compositional bias: basic and acidic residues. The Q motif motif lies at 102 to 130 (FDHLCGIVPPYLLKKLTAQNFTAPTPVQA). A Helicase ATP-binding domain is found at 133-307 (WPVLLSGRDL…AEFQKQWIRI (175 aa)). 146 to 153 (AKTGSGKT) provides a ligand contact to ATP. A DEAD box motif is present at residues 255–258 (DEAD). The 149-residue stretch at 335 to 483 (ELRKLMQEHR…EIPDWMIEWN (149 aa)) folds into the Helicase C-terminal domain.

The protein belongs to the DEAD box helicase family. DDX5/DBP2 subfamily.

The protein resides in the nucleus. The catalysed reaction is ATP + H2O = ADP + phosphate + H(+). In Trypanosoma brucei brucei, this protein is Putative DEAD-box RNA helicase HEL64 (HEL64).